The primary structure comprises 89 residues: Small ribosomal subunit protein uS17 (89 aa).

Belongs to the universal ribosomal protein uS17 family. As to quaternary structure, part of the 30S ribosomal subunit.

Functionally, one of the primary rRNA binding proteins, it binds specifically to the 5'-end of 16S ribosomal RNA. The sequence is that of Small ribosomal subunit protein uS17 from Xanthomonas campestris pv. campestris (strain 8004).